A 320-amino-acid polypeptide reads, in one-letter code: Mitochondrial oxaloacetate transport protein (320 aa).

Solcar repeat units follow at residues 21-114, 126-218, and 227-313; these read LGPV…IRRT, NKLA…AKRM, and EGMI…TNKL. 6 helical membrane passes run 26 to 47, 91 to 111, 129 to 145, 197 to 217, 233 to 253, and 285 to 306; these read GFLSGGLAACGAVTLTNPFEVI, GTAYVYQICLNGCRLGFYEPI, AINVASGAGSGLCGALF, AILRTVSGSSVQLPIYNWAKR, LTASAVSGFGVCCTMQIFDTV, and LYKGFGAHLARIAPHTIFCLTF.

Belongs to the mitochondrial carrier (TC 2.A.29) family.

It localises to the mitochondrion inner membrane. The catalysed reaction is a dicarboxylate(in) + sulfate(out) = a dicarboxylate(out) + sulfate(in). The enzyme catalyses (2S)-2-isopropylmalate(in) + sulfate(out) = (2S)-2-isopropylmalate(out) + sulfate(in). It carries out the reaction (2R,3S)-3-isopropylmalate(in) + sulfate(out) = (2R,3S)-3-isopropylmalate(out) + sulfate(in). It catalyses the reaction malonate(in) + sulfate(out) = malonate(out) + sulfate(in). The catalysed reaction is oxaloacetate(in) + sulfate(out) = oxaloacetate(out) + sulfate(in). The enzyme catalyses thiosulfate(in) + sulfate(out) = thiosulfate(out) + sulfate(in). In terms of biological role, antiporter that exchanges dicarboxylates and sulfur oxoanions across the inner membrane of mitochondria. Exports alpha-isopropylmalate from mitochondrial matrix to the cytosol, where it serves as a precursor for leucine biosynthesis. The chain is Mitochondrial oxaloacetate transport protein (oac1) from Schizosaccharomyces pombe (strain 972 / ATCC 24843) (Fission yeast).